The primary structure comprises 200 residues: MEALSGRVGVKCGRWNPTAEQVKVLTELFRAGLRTPSTEQIQRISTHLSAFGKVESKNVFYWFQNHKARERHHHKKRRRGASSPDSGSNDDDGRAAAHEGDADLVLQPPESKREARSYGHHHRLMTCYVRDVVETEAMWERPTREVETLELFPLKSYDLEVDKVRYVRGGGGEQCREISFFDVAAGRDPPLELRLCSFGL.

Positions 10–74 (VKCGRWNPTA…NHKARERHHH (65 aa)) form a DNA-binding region, homeobox; WUS-type. A compositionally biased stretch (basic residues) spans 70-80 (ERHHHKKRRRG). Residues 70–118 (ERHHHKKRRRGASSPDSGSNDDDGRAAAHEGDADLVLQPPESKREARSY) form a disordered region. Residues 91–101 (DDGRAAAHEGD) show a composition bias toward basic and acidic residues.

Belongs to the WUS homeobox family. As to expression, specifically expressed in the central cells of the quiescent center (QC) of the root.

Its subcellular location is the nucleus. In terms of biological role, transcription factor which may be involved in the specification and maintenance of the stem cells (QC cells) in the root apical meristem (RAM). The sequence is that of WUSCHEL-related homeobox 9 (WOX9) from Oryza sativa subsp. japonica (Rice).